The chain runs to 136 residues: MARTKQTARKSTGGKAPRKQLASKAARKSAPSTGGVKKPHRYKPGTVALREIRRFQKSTELLIRKLPFQRLVREIAQDFKTDLRFQSSAIGALQEAVEAYLVGLFEDTNLCAIHAKRVTIQKKDIQLARRLRGERS.

Positions 1–43 are disordered; it reads MARTKQTARKSTGGKAPRKQLASKAARKSAPSTGGVKKPHRYK. Lysine 5 carries the N6,N6,N6-trimethyllysine; alternate modification. At lysine 5 the chain carries N6,N6-dimethyllysine; alternate. Residues lysine 5 and lysine 10 each carry the N6-methyllysine; alternate modification. Position 10 is an N6-acetyllysine; alternate (lysine 10). The residue at position 11 (serine 11) is a Phosphoserine. At lysine 15 the chain carries N6,N6-dimethyllysine; alternate. An N6-acetyllysine; alternate mark is found at lysine 15, lysine 19, lysine 24, lysine 28, and lysine 37. Residues lysine 19, lysine 24, lysine 28, and lysine 37 each carry the N6-methyllysine; alternate modification. 2 positions are modified to N6,N6,N6-trimethyllysine; alternate: lysine 28 and lysine 37. Residues lysine 28 and lysine 37 each carry the N6,N6-dimethyllysine; alternate modification. N6-acetyllysine is present on residues lysine 57 and lysine 65. Lysine 80 bears the N6,N6,N6-trimethyllysine; alternate mark. At lysine 80 the chain carries N6,N6-dimethyllysine; alternate. Lysine 80 bears the N6-methyllysine; alternate mark.

Belongs to the histone H3 family. As to quaternary structure, the nucleosome is a histone octamer containing two molecules each of H2A, H2B, H3 and H4 assembled in one H3-H4 heterotetramer and two H2A-H2B heterodimers. The octamer wraps approximately 147 bp of DNA. Phosphorylated to form H3S10ph. H3S10ph promotes subsequent H3K14ac formation and is required for transcriptional activation through TBP recruitment to the promoters. Post-translationally, mono-, di- and trimethylated by the COMPASS complex to form H3K4me1/2/3. H3K4me activates gene expression by regulating transcription elongation and plays a role in telomere length maintenance. H3K4me enrichment correlates with transcription levels, and occurs in a 5' to 3' gradient with H3K4me3 enrichment at the 5'-end of genes, shifting to H3K4me2 and then H3K4me1. Methylated by SET2 to form H3K36me. H3K36me represses gene expression. Methylated by DOT1 to form H3K79me. H3K79me is required for association of SIR proteins with telomeric regions and for telomeric silencing. The COMPASS-mediated formation of H3K4me2/3 and the DOT1-mediated formation of H3K79me require H2BK123ub1. In terms of processing, acetylation of histone H3 leads to transcriptional activation. H3K14ac formation by GCN5 is promoted by H3S10ph. H3K14ac can also be formed by ESA1. H3K56ac formation occurs predominantly in newly synthesized H3 molecules during G1, S and G2/M of the cell cycle and may be involved in DNA repair.

The protein resides in the nucleus. The protein localises to the chromosome. Functionally, core component of nucleosome. Nucleosomes wrap and compact DNA into chromatin, limiting DNA accessibility to the cellular machineries which require DNA as a template. Histones thereby play a central role in transcription regulation, DNA repair, DNA replication and chromosomal stability. DNA accessibility is regulated via a complex set of post-translational modifications of histones, also called histone code, and nucleosome remodeling. This chain is Histone H3.1/H3.2 (HHT1), found in Lodderomyces elongisporus (strain ATCC 11503 / CBS 2605 / JCM 1781 / NBRC 1676 / NRRL YB-4239) (Yeast).